A 278-amino-acid chain; its full sequence is Small ribosomal subunit protein uS2 (278 aa).

Disordered stretches follow at residues 216–235 (EAAAAAKEAEDDTGYTTQWD) and 250–278 (NFAAAPADGNWGATTGGDWAAAGGEEWTN). Residues 256 to 278 (ADGNWGATTGGDWAAAGGEEWTN) are compositionally biased toward low complexity.

This sequence belongs to the universal ribosomal protein uS2 family. In terms of assembly, component of the small ribosomal subunit. Mature ribosomes consist of a small (40S) and a large (60S) subunit. The 40S subunit contains about 33 different proteins and 1 molecule of RNA (18S). The 60S subunit contains about 49 different proteins and 3 molecules of RNA (25S, 5.8S and 5S). Interacts with ribosomal protein S21.

The protein resides in the cytoplasm. Functionally, required for the assembly and/or stability of the 40S ribosomal subunit. Required for the processing of the 20S rRNA-precursor to mature 18S rRNA in a late step of the maturation of 40S ribosomal subunits. The protein is Small ribosomal subunit protein uS2 of Monosiga brevicollis (Choanoflagellate).